Reading from the N-terminus, the 256-residue chain is Small ribosomal subunit protein eS1 (256 aa).

N-acetylalanine; partial is present on Ala-2.

Belongs to the eukaryotic ribosomal protein eS1 family. As to quaternary structure, component of the small ribosomal subunit. Mature ribosomes consist of a small (40S) and a large (60S) subunit. The 40S subunit contains about 33 different proteins and 1 molecule of RNA (18S). The 60S subunit contains about 49 different proteins and 3 molecules of RNA (25S, 5.8S and 5S).

The protein localises to the cytoplasm. This is Small ribosomal subunit protein eS1 (rps1) from Sclerotinia sclerotiorum (strain ATCC 18683 / 1980 / Ss-1) (White mold).